The sequence spans 691 residues: Replication and transcription activator (691 aa).

O-linked (GlcNAc) threonine; by host glycans are attached at residues Thr-366 and Thr-367. 2 disordered regions span residues Glu-482–Pro-582 and Leu-626–Gly-677. A compositionally biased stretch (low complexity) spans Thr-504–Thr-513. The segment covering Pro-515–Ala-531 has biased composition (basic residues). Residues Thr-539 to Pro-556 are compositionally biased toward low complexity. The span at Glu-655 to Gly-677 shows a compositional bias: polar residues.

Belongs to the herpesviridae TAF50 family. As to quaternary structure, homotetramer. Interacts with KTA/ORF57. Interacts with host PARP1; this interaction negatively regulates RTA/ORF50 transactivation activity. Interacts with host SMC5 and SMC6; these interactions remove the repressive chromatin structure to allow viral reactivation. Interacts with host POU2F1; this interaction enhances RTA/ORF50-mediated transactivation of several viral promoters including K-bZIP promoter.

It localises to the host nucleus. It catalyses the reaction S-ubiquitinyl-[E2 ubiquitin-conjugating enzyme]-L-cysteine + [acceptor protein]-L-lysine = [E2 ubiquitin-conjugating enzyme]-L-cysteine + N(6)-ubiquitinyl-[acceptor protein]-L-lysine.. Its function is as follows. Transcriptional transactivator that is necessary and sufficient for reactivation of the virus from latency. Acts post-transcriptionally and transcriptionally to regulate viral lytic gene expression and synergistically with ORF57 activates certain early and late viral promoters including its own promoter. Autostimulation on its promoter is mediated by the formation of a ternary complex between ORF50 and the cellular components HGMB1 and POU2F1. Also possesses a bimodal activity in targeting proteins for degradation through using its own E3 ligase activity or by stabilizing and chaperoning host E3 ligases. These activities help to subvert the host innate and adaptive immune responses while also modulating the host transcriptome and protein landscape to promote virus production. For instance, targets the host SMC5/6 complex for ubiquitination and subsequent degradation through the ubiquitin-proteasome during reactivation while during latency, host SMC5/6 complex binds to the viral episome and condenses viral chromatin, creating a repressive chromatin structure to silence genome transcription. Hijacks the cellular E3 ligase complex RNF20/40 to increase the level of transcriptionally active RNA polymerase II on viral gene promoters thereby facilitating lytic gene expression. Acts as a SUMO-targeting ubiquitin ligase and affects general sumoylation of cellular proteins. Promotes the polyubiquitination and subsequent degradation of host MYD88 and thereby inhibits MYD88-mediated TLR4 signaling. Induces the degradation of vFLIP/ORF71 together with cellular ubiquitin ligase ITCH to prevent vFLIP-induced NF-kappa-B signaling. The protein is Replication and transcription activator (ORF50) of Homo sapiens (Human).